The primary structure comprises 209 residues: Ribonuclease HII (209 aa).

In terms of domain architecture, RNase H type-2 spans 6–209 (SLEAGIDEAG…IKRMTNSRLF (204 aa)). Residues aspartate 12, glutamate 13, and aspartate 108 each coordinate a divalent metal cation.

The protein belongs to the RNase HII family. Requires Mn(2+) as cofactor. The cofactor is Mg(2+).

The protein resides in the cytoplasm. The catalysed reaction is Endonucleolytic cleavage to 5'-phosphomonoester.. Functionally, endonuclease that specifically degrades the RNA of RNA-DNA hybrids. The protein is Ribonuclease HII of Caldivirga maquilingensis (strain ATCC 700844 / DSM 13496 / JCM 10307 / IC-167).